Consider the following 608-residue polypeptide: UvrABC system protein C (608 aa).

A GIY-YIG domain is found at 22-100 (EKPGIYQYLN…IKKYKPRYNV (79 aa)). The UVR domain occupies 214-249 (QEISRLLYQRMQDLAAEMKFEEAQKVKEKYALIENY).

It belongs to the UvrC family. As to quaternary structure, interacts with UvrB in an incision complex.

Its subcellular location is the cytoplasm. Its function is as follows. The UvrABC repair system catalyzes the recognition and processing of DNA lesions. UvrC both incises the 5' and 3' sides of the lesion. The N-terminal half is responsible for the 3' incision and the C-terminal half is responsible for the 5' incision. The protein is UvrABC system protein C of Bacteroides fragilis (strain ATCC 25285 / DSM 2151 / CCUG 4856 / JCM 11019 / LMG 10263 / NCTC 9343 / Onslow / VPI 2553 / EN-2).